Here is a 301-residue protein sequence, read N- to C-terminus: N-acetylmuramic acid 6-phosphate etherase (301 aa).

One can recognise an SIS domain in the interval 55–215 (IADALRAGGR…STISMVALGK (161 aa)). Glutamate 83 serves as the catalytic Proton donor. Glutamate 111 is an active-site residue.

Belongs to the GCKR-like family. MurNAc-6-P etherase subfamily. As to quaternary structure, homodimer.

It catalyses the reaction N-acetyl-D-muramate 6-phosphate + H2O = N-acetyl-D-glucosamine 6-phosphate + (R)-lactate. Its pathway is amino-sugar metabolism; 1,6-anhydro-N-acetylmuramate degradation. It functions in the pathway amino-sugar metabolism; N-acetylmuramate degradation. It participates in cell wall biogenesis; peptidoglycan recycling. In terms of biological role, specifically catalyzes the cleavage of the D-lactyl ether substituent of MurNAc 6-phosphate, producing GlcNAc 6-phosphate and D-lactate. Together with AnmK, is also required for the utilization of anhydro-N-acetylmuramic acid (anhMurNAc) either imported from the medium or derived from its own cell wall murein, and thus plays a role in cell wall recycling. In Burkholderia lata (strain ATCC 17760 / DSM 23089 / LMG 22485 / NCIMB 9086 / R18194 / 383), this protein is N-acetylmuramic acid 6-phosphate etherase.